Reading from the N-terminus, the 283-residue chain is Shikimate dehydrogenase (NADP(+)) (283 aa).

Shikimate contacts are provided by residues 19–21 (SRS) and Thr66. Lys70 (proton acceptor) is an active-site residue. Glu82 provides a ligand contact to NADP(+). Shikimate is bound by residues Asn91 and Asp107. Residues 133–137 (GAGGA) and Ile226 contribute to the NADP(+) site. Tyr228 is a binding site for shikimate. An NADP(+)-binding site is contributed by Gly249.

It belongs to the shikimate dehydrogenase family. In terms of assembly, homodimer.

It catalyses the reaction shikimate + NADP(+) = 3-dehydroshikimate + NADPH + H(+). The protein operates within metabolic intermediate biosynthesis; chorismate biosynthesis; chorismate from D-erythrose 4-phosphate and phosphoenolpyruvate: step 4/7. Functionally, involved in the biosynthesis of the chorismate, which leads to the biosynthesis of aromatic amino acids. Catalyzes the reversible NADPH linked reduction of 3-dehydroshikimate (DHSA) to yield shikimate (SA). The sequence is that of Shikimate dehydrogenase (NADP(+)) from Rhodospirillum rubrum (strain ATCC 11170 / ATH 1.1.1 / DSM 467 / LMG 4362 / NCIMB 8255 / S1).